Reading from the N-terminus, the 304-residue chain is Calmodulin-lysine N-methyltransferase (304 aa).

Belongs to the class I-like SAM-binding methyltransferase superfamily. CLNMT methyltransferase family. In terms of assembly, monomer. In terms of tissue distribution, expressed in discreet spatial and tissue-specific patterns including root tips, leaves-tips, floral buds, stamens, hydathodes, stigma, anther, siliques, apical meristems and germinating seeds. Also observed at high levels in the root stele region.

It localises to the cytoplasm. The protein localises to the nucleus. The enzyme catalyses [calmodulin]-L-lysine + S-adenosyl-L-methionine = [calmodulin]-N(6)-methyl-L-lysine + S-adenosyl-L-homocysteine + H(+). Functionally, catalyzes the trimethylation of calmodulin. Regulates roots development probably by modulating auxin signaling responses. May be involved in gravitropism. Involved in abscisic acid (ABA)-mediated and abiotic stress responses, including salt (NaCl), cold, drought and heat stresses. This is Calmodulin-lysine N-methyltransferase from Arabidopsis thaliana (Mouse-ear cress).